Here is a 131-residue protein sequence, read N- to C-terminus: Large ribosomal subunit protein bL17 (131 aa).

This sequence belongs to the bacterial ribosomal protein bL17 family. In terms of assembly, part of the 50S ribosomal subunit. Contacts protein L32.

The chain is Large ribosomal subunit protein bL17 from Nitrosospira multiformis (strain ATCC 25196 / NCIMB 11849 / C 71).